An 804-amino-acid polypeptide reads, in one-letter code: Phenylalanine--tRNA ligase beta subunit (804 aa).

Residues 39–147 enclose the tRNA-binding domain; that stretch reads GEGLDSVVTA…PDCEPGQPVF (109 aa). The region spanning 401 to 480 is the B5 domain; that stretch reads LAERKVTLAV…RLNGYDNIPV (80 aa). Residues Asp-458, Asp-464, Glu-467, and Glu-468 each coordinate Mg(2+). The region spanning 711-804 is the FDX-ACB domain; that stretch reads SRFPQVARDS…LIAKLGAEIR (94 aa).

The protein belongs to the phenylalanyl-tRNA synthetase beta subunit family. Type 1 subfamily. Tetramer of two alpha and two beta subunits. Requires Mg(2+) as cofactor.

The protein localises to the cytoplasm. It catalyses the reaction tRNA(Phe) + L-phenylalanine + ATP = L-phenylalanyl-tRNA(Phe) + AMP + diphosphate + H(+). This is Phenylalanine--tRNA ligase beta subunit from Syntrophotalea carbinolica (strain DSM 2380 / NBRC 103641 / GraBd1) (Pelobacter carbinolicus).